The chain runs to 988 residues: UPF0182 protein MAB_3498c (988 aa).

The next 7 helical transmembrane spans lie at 19–39 (LVAASLVIVVLLLIGPRLVDT), 63–83 (LALFLIVGTLVAAVVFAGFGL), 114–134 (LFLIGVPILIGVLAGVVAQSY), 176–196 (FIAASIALIVNGLVHYIFGGI), 211–231 (IQLITFAGILVLLKVAAYWLD), 260–280 (KLILLAIAVICAVAVFSALVL), and 288–308 (IGLALLLLSSLVVGAGWPLIV).

The protein belongs to the UPF0182 family.

It localises to the cell membrane. This is UPF0182 protein MAB_3498c from Mycobacteroides abscessus (strain ATCC 19977 / DSM 44196 / CCUG 20993 / CIP 104536 / JCM 13569 / NCTC 13031 / TMC 1543 / L948) (Mycobacterium abscessus).